The following is a 219-amino-acid chain: Elongation factor Ts (219 aa).

The interval 83 to 86 (TDFV) is involved in Mg(2+) ion dislocation from EF-Tu.

It belongs to the EF-Ts family.

The protein localises to the cytoplasm. Associates with the EF-Tu.GDP complex and induces the exchange of GDP to GTP. It remains bound to the aminoacyl-tRNA.EF-Tu.GTP complex up to the GTP hydrolysis stage on the ribosome. This Synechococcus sp. (strain WH7803) protein is Elongation factor Ts.